The sequence spans 182 residues: NADH-ubiquinone oxidoreductase 20 kDa subunit (182 aa).

[4Fe-4S] cluster-binding residues include cysteine 57, cysteine 58, cysteine 122, and cysteine 152.

The protein belongs to the complex I 20 kDa subunit family. [4Fe-4S] cluster is required as a cofactor.

It localises to the mitochondrion. It carries out the reaction a ubiquinone + NADH + 5 H(+)(in) = a ubiquinol + NAD(+) + 4 H(+)(out). The chain is NADH-ubiquinone oxidoreductase 20 kDa subunit (NAD10) from Reclinomonas americana.